The sequence spans 372 residues: 4-hydroxy-3-methylbut-2-en-1-yl diphosphate synthase (flavodoxin) (372 aa).

Positions 270, 273, 305, and 312 each coordinate [4Fe-4S] cluster.

This sequence belongs to the IspG family. The cofactor is [4Fe-4S] cluster.

The catalysed reaction is (2E)-4-hydroxy-3-methylbut-2-enyl diphosphate + oxidized [flavodoxin] + H2O + 2 H(+) = 2-C-methyl-D-erythritol 2,4-cyclic diphosphate + reduced [flavodoxin]. Its pathway is isoprenoid biosynthesis; isopentenyl diphosphate biosynthesis via DXP pathway; isopentenyl diphosphate from 1-deoxy-D-xylulose 5-phosphate: step 5/6. Functionally, converts 2C-methyl-D-erythritol 2,4-cyclodiphosphate (ME-2,4cPP) into 1-hydroxy-2-methyl-2-(E)-butenyl 4-diphosphate. The sequence is that of 4-hydroxy-3-methylbut-2-en-1-yl diphosphate synthase (flavodoxin) from Idiomarina loihiensis (strain ATCC BAA-735 / DSM 15497 / L2-TR).